Consider the following 489-residue polypeptide: GTPase Der (489 aa).

2 consecutive EngA-type G domains span residues 3 to 166 and 195 to 368; these read PVIA…PKDE and IKIA…KSAV. GTP-binding positions include 9-16, 56-60, 118-121, 201-208, 248-252, and 313-316; these read GRPNVGKS, DTGGI, NKID, DTAGV, and NKWD. Residues 369-453 enclose the KH-like domain; it reads TRWPTSRLTQ…PIRIEFKGGE (85 aa). Residues 451–489 are disordered; that stretch reads GGENPYEGNKNTLTDRQVNKKRRMMSHHKKADKKRRDKR. Residues 469-489 are compositionally biased toward basic residues; that stretch reads NKKRRMMSHHKKADKKRRDKR.

The protein belongs to the TRAFAC class TrmE-Era-EngA-EngB-Septin-like GTPase superfamily. EngA (Der) GTPase family. As to quaternary structure, associates with the 50S ribosomal subunit.

Its function is as follows. GTPase that plays an essential role in the late steps of ribosome biogenesis. The sequence is that of GTPase Der from Pseudomonas syringae pv. tomato (strain ATCC BAA-871 / DC3000).